Reading from the N-terminus, the 88-residue chain is uncharacterized protein (88 aa).

Residues 1–88 (MPHLPELSKQ…IRRGNPSGVA (88 aa)) are disordered. Over residues 21 to 65 (YRAKGEDLENSHHNNESRLAEGVHYDRNKAPALQEREKASTEKVN) the composition is skewed to basic and acidic residues.

Involved in osmoadaptation. This is an uncharacterized protein from Emericella nidulans (strain FGSC A4 / ATCC 38163 / CBS 112.46 / NRRL 194 / M139) (Aspergillus nidulans).